Consider the following 923-residue polypeptide: Meiotic recombination protein rec11 (923 aa).

In terms of domain architecture, SCD spans 278–365; the sequence is LFSRIHDIRA…DRFSLRIVEI (88 aa).

The protein is Meiotic recombination protein rec11 (rec11) of Schizosaccharomyces pombe (strain 972 / ATCC 24843) (Fission yeast).